The following is a 317-amino-acid chain: Acetyl-coenzyme A carboxylase carboxyl transferase subunit beta (317 aa).

A CoA carboxyltransferase N-terminal domain is found at 30-299 (LWTKCVACTA…VLPPLNVREK (270 aa)). 4 residues coordinate Zn(2+): Cys-34, Cys-37, Cys-53, and Cys-56. The C4-type zinc-finger motif lies at 34-56 (CVACTALTYTKDLQANQLVCTEC).

It belongs to the AccD/PCCB family. As to quaternary structure, acetyl-CoA carboxylase is a heterohexamer composed of biotin carboxyl carrier protein (AccB), biotin carboxylase (AccC) and two subunits each of ACCase subunit alpha (AccA) and ACCase subunit beta (AccD). The cofactor is Zn(2+).

Its subcellular location is the cytoplasm. The enzyme catalyses N(6)-carboxybiotinyl-L-lysyl-[protein] + acetyl-CoA = N(6)-biotinyl-L-lysyl-[protein] + malonyl-CoA. It functions in the pathway lipid metabolism; malonyl-CoA biosynthesis; malonyl-CoA from acetyl-CoA: step 1/1. Functionally, component of the acetyl coenzyme A carboxylase (ACC) complex. Biotin carboxylase (BC) catalyzes the carboxylation of biotin on its carrier protein (BCCP) and then the CO(2) group is transferred by the transcarboxylase to acetyl-CoA to form malonyl-CoA. The polypeptide is Acetyl-coenzyme A carboxylase carboxyl transferase subunit beta (Crocosphaera subtropica (strain ATCC 51142 / BH68) (Cyanothece sp. (strain ATCC 51142))).